A 146-amino-acid chain; its full sequence is Hemoglobin subunit beta-1 (146 aa).

The region spanning 2–146 is the Globin domain; it reads KWTDKERAVI…VVSALGKQYC (145 aa). 2 residues coordinate heme b: histidine 63 and histidine 92.

This sequence belongs to the globin family. In terms of assembly, heterotetramer of two alpha chains and two beta chains. In terms of tissue distribution, red blood cells.

Involved in oxygen transport from gills to the various peripheral tissues. This chain is Hemoglobin subunit beta-1, found in Lycodes reticulatus (Arctic eelpout).